A 267-amino-acid chain; its full sequence is Tryptophan synthase alpha chain (267 aa).

Catalysis depends on proton acceptor residues Glu49 and Asp60.

This sequence belongs to the TrpA family. In terms of assembly, tetramer of two alpha and two beta chains.

The catalysed reaction is (1S,2R)-1-C-(indol-3-yl)glycerol 3-phosphate + L-serine = D-glyceraldehyde 3-phosphate + L-tryptophan + H2O. Its pathway is amino-acid biosynthesis; L-tryptophan biosynthesis; L-tryptophan from chorismate: step 5/5. The alpha subunit is responsible for the aldol cleavage of indoleglycerol phosphate to indole and glyceraldehyde 3-phosphate. This Chloroflexus aggregans (strain MD-66 / DSM 9485) protein is Tryptophan synthase alpha chain.